Reading from the N-terminus, the 376-residue chain is Queuine tRNA-ribosyltransferase (376 aa).

The active-site Proton acceptor is the aspartate 93. Substrate contacts are provided by residues 93 to 97, aspartate 147, glutamine 190, and glycine 217; that span reads DSGGF. Residues 248–254 form an RNA binding region; that stretch reads GVGTPDD. Aspartate 267 acts as the Nucleophile in catalysis. The RNA binding; important for wobble base 34 recognition stretch occupies residues 272 to 276; it reads TRSGR.

This sequence belongs to the queuine tRNA-ribosyltransferase family. Homodimer. Within each dimer, one monomer is responsible for RNA recognition and catalysis, while the other monomer binds to the replacement base PreQ1.

It carries out the reaction 7-aminomethyl-7-carbaguanine + guanosine(34) in tRNA = 7-aminomethyl-7-carbaguanosine(34) in tRNA + guanine. It participates in tRNA modification; tRNA-queuosine biosynthesis. In terms of biological role, catalyzes the base-exchange of a guanine (G) residue with the queuine precursor 7-aminomethyl-7-deazaguanine (PreQ1) at position 34 (anticodon wobble position) in tRNAs with GU(N) anticodons (tRNA-Asp, -Asn, -His and -Tyr). Catalysis occurs through a double-displacement mechanism. The nucleophile active site attacks the C1' of nucleotide 34 to detach the guanine base from the RNA, forming a covalent enzyme-RNA intermediate. The proton acceptor active site deprotonates the incoming PreQ1, allowing a nucleophilic attack on the C1' of the ribose to form the product. After dissociation, two additional enzymatic reactions on the tRNA convert PreQ1 to queuine (Q), resulting in the hypermodified nucleoside queuosine (7-(((4,5-cis-dihydroxy-2-cyclopenten-1-yl)amino)methyl)-7-deazaguanosine). The chain is Queuine tRNA-ribosyltransferase from Rhizobium meliloti (strain 1021) (Ensifer meliloti).